We begin with the raw amino-acid sequence, 603 residues long: Extracellular basic protease (603 aa).

Residues 1 to 21 form the signal peptide; it reads MNLSNISAVKVLTLVVSAAIA. The propeptide occupies 22 to 132; it reads GQVCAAESIV…VEVDRLAYPK (111 aa). A Peptidase S8 domain is found at 143-468; sequence QWHYFGNYGV…SGIVDANAAV (326 aa). Residue D173 is the Charge relay system of the active site. The disordered stretch occupies residues 197-221; that stretch reads PNARDGDQRDNNPADEGDWFDNWDC. 2 disulfides stabilise this stretch: C221-C273 and C315-C352. The active-site Charge relay system is the H237. S409 (charge relay system) is an active-site residue. The propeptide occupies 477 to 603; that stretch reads RAQPRPPVNQ…GSIDSWSLTF (127 aa). The 126-residue stretch at 478 to 603 folds into the P/Homo B domain; that stretch reads AQPRPPVNQP…GSIDSWSLTF (126 aa).

This sequence belongs to the peptidase S8 family.

The protein localises to the secreted. In Dichelobacter nodosus (Bacteroides nodosus), this protein is Extracellular basic protease (bprV).